Here is a 1015-residue protein sequence, read N- to C-terminus: DExH-box ATP-dependent RNA helicase DExH8 (1015 aa).

Residues 36–197 (IDKILENRVT…FKELGRGERV (162 aa)) enclose the Helicase ATP-binding domain. 49–56 (GEPGCGKS) lines the ATP pocket. Residues 144–147 (DEVH) carry the DEVH box motif. In terms of domain architecture, Helicase C-terminal spans 254-419 (LIHDLILYIH…KLSLRQQVLH (166 aa)). C3H1-type zinc fingers lie at residues 727–753 (YGEAPVCVYFLNGYCNRGGQCTFTHTL) and 754–782 (QSTRPACKFFASSQGCRNGESCLFSHAMR).

This sequence belongs to the DExH box helicase family.

The enzyme catalyses ATP + H2O = ADP + phosphate + H(+). The polypeptide is DExH-box ATP-dependent RNA helicase DExH8 (Arabidopsis thaliana (Mouse-ear cress)).